We begin with the raw amino-acid sequence, 694 residues long: LMBR1 domain-containing protein 2 homolog (694 aa).

The Extracellular portion of the chain corresponds to 1–3; it reads MAY. Residues 4 to 26 traverse the membrane as a helical segment; it reads LLSFGIVAALFLASISLYRYGNI. Residues 27-30 lie on the Cytoplasmic side of the membrane; sequence PRQH. A helical membrane pass occupies residues 31-51; sequence ILVTLSVLTAWCFSFLIVFTI. At 52 to 106 the chain is on the extracellular side; it reads PLDVTSTLYRQCVEEHRPTPAPNVTNTSSATVGPPPQCQEPWGMVPASVFPNLWR. N-linked (GlcNAc...) asparagine glycans are attached at residues Asn74 and Asn77. Residues 107 to 127 traverse the membrane as a helical segment; the sequence is IIYWSSQFLTWLIMPLMQSYL. At 128–144 the chain is on the cytoplasmic side; the sequence is KAGDFTVKGKLKSALIE. Residues 145–165 form a helical membrane-spanning segment; sequence NAIYYGSYLFICGVLLIYIAV. The Extracellular portion of the chain corresponds to 166-181; it reads KGESLDWQKLKAIASS. The helical transmembrane segment at 182-202 threads the bilayer; sequence ASNTWGLFLLILLLGYALVEV. Residues 203–381 are Cytoplasmic-facing; the sequence is PRSLWNNAKP…ECLLKAPFLK (179 aa). The stretch at 222–249 forms a coiled coil; the sequence is KAAKLSTEKAEAEEHVDDILESLQGLSR. Residues 382 to 402 form a helical membrane-spanning segment; sequence TMCVLTATMSAMVVWSELTFF. The Extracellular segment spans residues 403–426; it reads SRHPVLSIFANVIYVAKESYDFFT. Residues 427 to 447 form a helical membrane-spanning segment; sequence IEVFSMVVLCYFFYCTYSTIL. At 448–467 the chain is on the cytoplasmic side; that stretch reads RIRFLNLYYLAPHHQTNEHS. A helical transmembrane segment spans residues 468 to 488; the sequence is LIFSGMLLCRLTPPMCLNFLG. The Extracellular portion of the chain corresponds to 489–514; the sequence is LIHMDTHIIPNRIMETVYTQIMGHMD. A helical transmembrane segment spans residues 515 to 535; it reads VIGIISNGFNIYFPMCMLAFC. Topologically, residues 536-694 are cytoplasmic; it reads LATWFSLGSR…PPPRGLFDDV (159 aa). Positions 564 to 592 form a coiled coil; sequence ELVQEGKDLIAREKRRRQRAEEAMARRRD. The segment at 673 to 694 is disordered; the sequence is DYEAETDGRIVGPPPRGLFDDV.

This sequence belongs to the LIMR family.

It localises to the membrane. This chain is LMBR1 domain-containing protein 2 homolog, found in Drosophila melanogaster (Fruit fly).